The chain runs to 436 residues: 3-ketoacyl-CoA thiolase (436 aa).

The active-site Acyl-thioester intermediate is Cys-99. Catalysis depends on proton acceptor residues His-392 and Cys-422.

This sequence belongs to the thiolase-like superfamily. Thiolase family. Heterotetramer of two alpha chains (FadJ) and two beta chains (FadI).

It is found in the cytoplasm. The catalysed reaction is an acyl-CoA + acetyl-CoA = a 3-oxoacyl-CoA + CoA. The protein operates within lipid metabolism; fatty acid beta-oxidation. Catalyzes the final step of fatty acid oxidation in which acetyl-CoA is released and the CoA ester of a fatty acid two carbons shorter is formed. This chain is 3-ketoacyl-CoA thiolase, found in Shewanella loihica (strain ATCC BAA-1088 / PV-4).